Consider the following 137-residue polypeptide: Small ribosomal subunit protein eS17 (137 aa).

Belongs to the eukaryotic ribosomal protein eS17 family. In terms of assembly, component of the small ribosomal subunit. Mature ribosomes consist of a small (40S) and a large (60S) subunit. The 40S subunit contains about 32 different proteins and 1 molecule of RNA (18S). The 60S subunit contains 45 different proteins and 3 molecules of RNA (25S, 5.8S and 5S).

It localises to the cytoplasm. In terms of biological role, component of the ribosome, a large ribonucleoprotein complex responsible for the synthesis of proteins in the cell. The small ribosomal subunit (SSU) binds messenger RNAs (mRNAs) and translates the encoded message by selecting cognate aminoacyl-transfer RNA (tRNA) molecules. The large subunit (LSU) contains the ribosomal catalytic site termed the peptidyl transferase center (PTC), which catalyzes the formation of peptide bonds, thereby polymerizing the amino acids delivered by tRNAs into a polypeptide chain. The nascent polypeptides leave the ribosome through a tunnel in the LSU and interact with protein factors that function in enzymatic processing, targeting, and the membrane insertion of nascent chains at the exit of the ribosomal tunnel. The polypeptide is Small ribosomal subunit protein eS17 (RPS17B) (Candida albicans (strain SC5314 / ATCC MYA-2876) (Yeast)).